The chain runs to 278 residues: MSVPTVLENILARKFQEVAERSARVSLSELESLAKAADAPRGFAQALLAQAKKKQPAVIAEIKKASPSKGVIRENFVPADIAKSYEKGGATCLSVLTDIDYFQGADAYLQQARVACSLPVIRKDFMIDPYQIVEARALGADCVLLIVSALDDVKMAELASVAKDVGLDVLVEVHDGDELERALKTLDTPLVGVNNRNLHTFDVSLETTLDLLPRIPRDRLVITESGILNRADVELMEISDVYAFLVGEAFMRAENPGIELQRLFFPERGVPVSGSTLD.

It belongs to the TrpC family.

It catalyses the reaction 1-(2-carboxyphenylamino)-1-deoxy-D-ribulose 5-phosphate + H(+) = (1S,2R)-1-C-(indol-3-yl)glycerol 3-phosphate + CO2 + H2O. It participates in amino-acid biosynthesis; L-tryptophan biosynthesis; L-tryptophan from chorismate: step 4/5. The polypeptide is Indole-3-glycerol phosphate synthase (Pseudomonas fluorescens (strain Pf0-1)).